The following is a 309-amino-acid chain: Ribonuclease Z (309 aa).

Residues His63, His65, Asp67, His68, His141, Asp212, and His270 each contribute to the Zn(2+) site. Asp67 acts as the Proton acceptor in catalysis.

Belongs to the RNase Z family. Homodimer. The cofactor is Zn(2+).

The catalysed reaction is Endonucleolytic cleavage of RNA, removing extra 3' nucleotides from tRNA precursor, generating 3' termini of tRNAs. A 3'-hydroxy group is left at the tRNA terminus and a 5'-phosphoryl group is left at the trailer molecule.. Its function is as follows. Zinc phosphodiesterase, which displays some tRNA 3'-processing endonuclease activity. Probably involved in tRNA maturation, by removing a 3'-trailer from precursor tRNA. This is Ribonuclease Z from Lactobacillus johnsonii (strain CNCM I-12250 / La1 / NCC 533).